We begin with the raw amino-acid sequence, 128 residues long: Large ribosomal subunit protein bL20 (128 aa).

The protein belongs to the bacterial ribosomal protein bL20 family.

In terms of biological role, binds directly to 23S ribosomal RNA and is necessary for the in vitro assembly process of the 50S ribosomal subunit. It is not involved in the protein synthesizing functions of that subunit. In Anaplasma marginale (strain Florida), this protein is Large ribosomal subunit protein bL20.